The following is a 572-amino-acid chain: Protein misato homolog 1 (572 aa).

The protein belongs to the misato family.

It localises to the mitochondrion outer membrane. It is found in the cytoplasm. Functionally, involved in the regulation of mitochondrial distribution and morphology. Required for mitochondrial fusion and mitochondrial network formation. The polypeptide is Protein misato homolog 1 (MSTO1) (Bos taurus (Bovine)).